Here is a 277-residue protein sequence, read N- to C-terminus: Putative phosphoenolpyruvate synthase regulatory protein (277 aa).

Glycine 157 to threonine 164 is an ADP binding site.

It belongs to the pyruvate, phosphate/water dikinase regulatory protein family. PSRP subfamily.

The catalysed reaction is [pyruvate, water dikinase] + ADP = [pyruvate, water dikinase]-phosphate + AMP + H(+). It catalyses the reaction [pyruvate, water dikinase]-phosphate + phosphate + H(+) = [pyruvate, water dikinase] + diphosphate. Bifunctional serine/threonine kinase and phosphorylase involved in the regulation of the phosphoenolpyruvate synthase (PEPS) by catalyzing its phosphorylation/dephosphorylation. The protein is Putative phosphoenolpyruvate synthase regulatory protein of Azoarcus sp. (strain BH72).